The primary structure comprises 160 residues: GPI-anchored protein LLG3 (160 aa).

The first 23 residues, 1–23 (MKITHHCLVSLLSILLLSGFAFS), serve as a signal peptide directing secretion. Asparagine 56 carries N-linked (GlcNAc...) asparagine glycosylation. The GPI-anchor amidated serine moiety is linked to residue serine 137. The propeptide at 138 to 160 (HASIPLVSTHVLLITVSILFHLF) is removed in mature form.

Expressed in pollen, pollen tubes, sporophytic pistil tissues, in the early stages of female gametophyte development, and in unfertilized, mature ovules.

The protein resides in the cell membrane. The polypeptide is GPI-anchored protein LLG3 (Arabidopsis thaliana (Mouse-ear cress)).